Here is a 312-residue protein sequence, read N- to C-terminus: Tetraspanin-17 (312 aa).

Transmembrane regions (helical) follow at residues 17–37 (IFSI…LWML), 64–84 (VSLV…CGAV), 89–109 (FLLL…VAMG), and 274–294 (IWIF…GICL).

This sequence belongs to the tetraspanin (TM4SF) family. As to expression, expressed in dopaminergic neurons, head muscles, vulva and spermatheca.

The protein localises to the cell membrane. The protein resides in the cell projection. It is found in the dendrite. Its subcellular location is the axon. Its function is as follows. Protects dopaminergic neurons against oxidative stress-induced neurodegeneration. May act partly via dopamine receptor dop-2 to negatively regulate dopamine reuptake transporter dat-1 activity. Also plays a role in modulating behaviors linked to dopamine signaling. Confers protection against oxidative stress in the whole body. The polypeptide is Tetraspanin-17 (Caenorhabditis elegans).